A 165-amino-acid polypeptide reads, in one-letter code: Thiol peroxidase (165 aa).

The 148-residue stretch at 18 to 165 (PAVGSPAPAF…YEAALAALGA (148 aa)) folds into the Thioredoxin domain. Cys60 functions as the Cysteine sulfenic acid (-SOH) intermediate in the catalytic mechanism. An intrachain disulfide couples Cys60 to Cys93.

This sequence belongs to the peroxiredoxin family. Tpx subfamily. As to quaternary structure, homodimer.

It carries out the reaction a hydroperoxide + [thioredoxin]-dithiol = an alcohol + [thioredoxin]-disulfide + H2O. Thiol-specific peroxidase that catalyzes the reduction of hydrogen peroxide and organic hydroperoxides to water and alcohols, respectively. Plays a role in cell protection against oxidative stress by detoxifying peroxides. This is Thiol peroxidase from Mycobacterium bovis (strain ATCC BAA-935 / AF2122/97).